We begin with the raw amino-acid sequence, 90 residues long: DNA-directed RNA polymerase subunit omega (90 aa).

Belongs to the RNA polymerase subunit omega family. In terms of assembly, the RNAP catalytic core consists of 2 alpha, 1 beta, 1 beta' and 1 omega subunit. When a sigma factor is associated with the core the holoenzyme is formed, which can initiate transcription.

The enzyme catalyses RNA(n) + a ribonucleoside 5'-triphosphate = RNA(n+1) + diphosphate. Functionally, promotes RNA polymerase assembly. Latches the N- and C-terminal regions of the beta' subunit thereby facilitating its interaction with the beta and alpha subunits. This Rhodopirellula baltica (strain DSM 10527 / NCIMB 13988 / SH1) protein is DNA-directed RNA polymerase subunit omega.